Here is a 289-residue protein sequence, read N- to C-terminus: ATP synthase gamma chain (289 aa).

Belongs to the ATPase gamma chain family. As to quaternary structure, F-type ATPases have 2 components, CF(1) - the catalytic core - and CF(0) - the membrane proton channel. CF(1) has five subunits: alpha(3), beta(3), gamma(1), delta(1), epsilon(1). CF(0) has three main subunits: a, b and c.

The protein localises to the cell membrane. In terms of biological role, produces ATP from ADP in the presence of a proton gradient across the membrane. The gamma chain is believed to be important in regulating ATPase activity and the flow of protons through the CF(0) complex. The sequence is that of ATP synthase gamma chain from Buchnera aphidicola subsp. Melaphis rhois.